The chain runs to 1097 residues: DNA-directed RNA polymerase subunit beta (1097 aa).

Residues 1073 to 1097 are disordered; sequence DVNPRRSTPSRPTYESLGVADYDED.

This sequence belongs to the RNA polymerase beta chain family. As to quaternary structure, in cyanobacteria the RNAP catalytic core is composed of 2 alpha, 1 beta, 1 beta', 1 gamma and 1 omega subunit. When a sigma factor is associated with the core the holoenzyme is formed, which can initiate transcription.

The enzyme catalyses RNA(n) + a ribonucleoside 5'-triphosphate = RNA(n+1) + diphosphate. Its function is as follows. DNA-dependent RNA polymerase catalyzes the transcription of DNA into RNA using the four ribonucleoside triphosphates as substrates. In Synechococcus sp. (strain RCC307), this protein is DNA-directed RNA polymerase subunit beta.